An 81-amino-acid polypeptide reads, in one-letter code: MDSLTSAASVLAAALAVGLAAIGPGIGQGSAAGQAVEGIARQPEAEGKIRGTLLLSLAFMEALTIYGLVVALVLLFANPFA.

The next 2 helical transmembrane spans lie at 7-27 (AASV…PGIG) and 57-77 (LAFM…LLFA).

This sequence belongs to the ATPase C chain family. As to quaternary structure, F-type ATPases have 2 components, F(1) - the catalytic core - and F(0) - the membrane proton channel. F(1) has five subunits: alpha(3), beta(3), gamma(1), delta(1), epsilon(1). F(0) has four main subunits: a(1), b(1), b'(1) and c(10-14). The alpha and beta chains form an alternating ring which encloses part of the gamma chain. F(1) is attached to F(0) by a central stalk formed by the gamma and epsilon chains, while a peripheral stalk is formed by the delta, b and b' chains.

Its subcellular location is the cellular thylakoid membrane. Its function is as follows. F(1)F(0) ATP synthase produces ATP from ADP in the presence of a proton or sodium gradient. F-type ATPases consist of two structural domains, F(1) containing the extramembraneous catalytic core and F(0) containing the membrane proton channel, linked together by a central stalk and a peripheral stalk. During catalysis, ATP synthesis in the catalytic domain of F(1) is coupled via a rotary mechanism of the central stalk subunits to proton translocation. In terms of biological role, key component of the F(0) channel; it plays a direct role in translocation across the membrane. A homomeric c-ring of between 10-14 subunits forms the central stalk rotor element with the F(1) delta and epsilon subunits. The polypeptide is ATP synthase subunit c (Synechococcus elongatus (strain ATCC 33912 / PCC 7942 / FACHB-805) (Anacystis nidulans R2)).